Reading from the N-terminus, the 391-residue chain is MIGTPYTEGARRAMLLGCGELGKEVAIELQRLGVEVIGVDRYANAPAMQVAHRSHVINMLDAKALRAIIELEKPHLVIPEIEAIATQTLVEMEAEGVNIIPTARATKLTMDREGIRRLAAETLGLPTSPYFFCDTETEFNQAIREIGVPCVVKPVMSSSGKGQSVIRDIALSHKAWQYAQEGGRAGGGRVIVEGFVPFDYEITLLTVSAVNGIHFCAPIGHRQEDGDYRESWQPQAMSDEVLAKSQAIASKVVEALGGYGLFGVELFVKGHEVYFSEVSPRPHDTGLVTLISQDLSEFALHVRAILGLPIPNIHQHGPSASAVILAEGTSSNIRYQGIGAALEAVNTQLRLFAKPDIDGRRRLGVALARDIDIDSAISKALDSASKVKVIF.

N(1)-(5-phospho-beta-D-ribosyl)glycinamide contacts are provided by residues 20-21 (EL) and E80. ATP is bound by residues R112, K153, 158-163 (SSGKGQ), 193-196 (EGFV), and E201. Positions 117-306 (RLAAETLGLP…EFALHVRAIL (190 aa)) constitute an ATP-grasp domain. Mg(2+)-binding residues include E265 and E277. N(1)-(5-phospho-beta-D-ribosyl)glycinamide-binding positions include D284, K354, and 361 to 362 (RR).

This sequence belongs to the PurK/PurT family. In terms of assembly, homodimer.

The enzyme catalyses N(1)-(5-phospho-beta-D-ribosyl)glycinamide + formate + ATP = N(2)-formyl-N(1)-(5-phospho-beta-D-ribosyl)glycinamide + ADP + phosphate + H(+). It functions in the pathway purine metabolism; IMP biosynthesis via de novo pathway; N(2)-formyl-N(1)-(5-phospho-D-ribosyl)glycinamide from N(1)-(5-phospho-D-ribosyl)glycinamide (formate route): step 1/1. In terms of biological role, involved in the de novo purine biosynthesis. Catalyzes the transfer of formate to 5-phospho-ribosyl-glycinamide (GAR), producing 5-phospho-ribosyl-N-formylglycinamide (FGAR). Formate is provided by PurU via hydrolysis of 10-formyl-tetrahydrofolate. This is Formate-dependent phosphoribosylglycinamide formyltransferase from Shewanella putrefaciens (strain CN-32 / ATCC BAA-453).